Consider the following 351-residue polypeptide: MCKSDLHDFLHGLPKCEHHVHLEGCLAPDLIFELAKRNNVSLPNEPAYESIEALSHRYGHFTSLDDFLRFYFIGMSVLHHESDFADLAWAYFQKAHADGVHHAEVFFDPQVHRDRGIPYETIVSGFVAGCQRAERELGLTTRLILCFVRHLPVDNAARVYQEALDQEHFDNEVVHGLGWSSTEVGPPKDMFRELYSSASAKGIRLTAHAGEEGDPSYISAALELGAQRIDHGIRLVEDPVLMEKVVRDRIMLTVCPISNLQLRCVESIAHVPIRKFLDAGVMFSINSDDPAYFGGYILDNYCAVQEAFQLTVDEWRVIAENSIKGSWIGEERKTELLKRIDDHVQRHVAAV.

The Zn(2+) site is built by histidine 19, histidine 21, and histidine 208. Glutamate 211 acts as the Proton donor in catalysis. Aspartate 288 lines the Zn(2+) pocket. Residue aspartate 289 coordinates substrate.

It belongs to the metallo-dependent hydrolases superfamily. Adenosine and AMP deaminases family. Adenine deaminase type 2 subfamily. Requires Zn(2+) as cofactor.

The protein localises to the cytoplasm. Its subcellular location is the nucleus. It catalyses the reaction adenine + H2O + H(+) = hypoxanthine + NH4(+). Catalyzes the hydrolytic deamination of adenine to hypoxanthine. Plays an important role in the purine salvage pathway and in nitrogen catabolism. This chain is Adenine deaminase (aah1), found in Aspergillus oryzae (strain ATCC 42149 / RIB 40) (Yellow koji mold).